A 304-amino-acid chain; its full sequence is Dihydroorotate dehydrogenase B (NAD(+)), catalytic subunit (304 aa).

FMN is bound by residues S20 and 44–45; that span reads KA. Residues K44 and 68–72 contribute to the substrate site; that span reads NAIGL. The FMN site is built by N98 and N126. Residue N126 coordinates substrate. The active-site Nucleophile is the C129. K164 and I190 together coordinate FMN. Residue 191–192 participates in substrate binding; the sequence is NT. FMN contacts are provided by residues G216, 242 to 243, and 264 to 265; these read GG and GT.

The protein belongs to the dihydroorotate dehydrogenase family. Type 1 subfamily. As to quaternary structure, heterotetramer of 2 PyrK and 2 PyrD type B subunits. FMN serves as cofactor.

It localises to the cytoplasm. The catalysed reaction is (S)-dihydroorotate + NAD(+) = orotate + NADH + H(+). The protein operates within pyrimidine metabolism; UMP biosynthesis via de novo pathway; orotate from (S)-dihydroorotate (NAD(+) route): step 1/1. Its function is as follows. Catalyzes the conversion of dihydroorotate to orotate with NAD(+) as electron acceptor. The protein is Dihydroorotate dehydrogenase B (NAD(+)), catalytic subunit (pyrD) of Oceanobacillus iheyensis (strain DSM 14371 / CIP 107618 / JCM 11309 / KCTC 3954 / HTE831).